A 599-amino-acid polypeptide reads, in one-letter code: uncharacterized protein (599 aa).

Residues 1–13 show a composition bias toward low complexity; sequence MSSSSSHNSFSGS. Disordered regions lie at residues 1-27 and 41-86; these read MSSS…IDGL and YPSN…DDTN. Residues 14-27 show a composition bias toward polar residues; it reads KTNAAEGQNSIDGL. Residues 44-70 show a composition bias toward basic and acidic residues; that stretch reads NEEKEVKETDIVPDENKVNELDVHKQS. 14 consecutive transmembrane segments (helical) span residues 97-117, 135-155, 162-182, 192-212, 223-243, 251-271, 290-310, 321-341, 359-379, 396-416, 423-443, 452-472, 489-509, and 552-572; these read IVVP…TIVT, WIGS…GVFC, IVLY…GASQ, AIQG…ISDI, GILA…GGAI, WIFF…VVFL, FIGL…ISLG, ILCY…YDTF, AALL…AYYV, VHTI…GMVL, LPLI…MICV, VMGL…PPLI, TLMF…EVIF, and VIWI…FFIK.

It belongs to the major facilitator superfamily. TCR/Tet family.

It localises to the membrane. This is an uncharacterized protein from Schizosaccharomyces pombe (strain 972 / ATCC 24843) (Fission yeast).